Consider the following 159-residue polypeptide: 2-C-methyl-D-erythritol 2,4-cyclodiphosphate synthase (159 aa).

2 residues coordinate a divalent metal cation: D8 and H10. 4-CDP-2-C-methyl-D-erythritol 2-phosphate contacts are provided by residues 8–10 (DVH) and 34–35 (HS). H42 is an a divalent metal cation binding site. 4-CDP-2-C-methyl-D-erythritol 2-phosphate is bound by residues 56-58 (DIG), 61-65 (FPDTD), 100-106 (AQAPKML), 132-135 (TTTE), F139, and R142.

Belongs to the IspF family. In terms of assembly, homotrimer. The cofactor is a divalent metal cation.

The catalysed reaction is 4-CDP-2-C-methyl-D-erythritol 2-phosphate = 2-C-methyl-D-erythritol 2,4-cyclic diphosphate + CMP. The protein operates within isoprenoid biosynthesis; isopentenyl diphosphate biosynthesis via DXP pathway; isopentenyl diphosphate from 1-deoxy-D-xylulose 5-phosphate: step 4/6. In terms of biological role, involved in the biosynthesis of isopentenyl diphosphate (IPP) and dimethylallyl diphosphate (DMAPP), two major building blocks of isoprenoid compounds. Catalyzes the conversion of 4-diphosphocytidyl-2-C-methyl-D-erythritol 2-phosphate (CDP-ME2P) to 2-C-methyl-D-erythritol 2,4-cyclodiphosphate (ME-CPP) with a corresponding release of cytidine 5-monophosphate (CMP). In Klebsiella pneumoniae subsp. pneumoniae (strain ATCC 700721 / MGH 78578), this protein is 2-C-methyl-D-erythritol 2,4-cyclodiphosphate synthase.